Reading from the N-terminus, the 452-residue chain is Tissue alpha-L-fucosidase (452 aa).

The first 17 residues, 1–17, serve as a signal peptide directing secretion; sequence MLLLLLLLLVAAAQAVA. N-linked (GlcNAc...) asparagine glycosylation is found at Asn-227, Asn-254, Asn-368, and Asn-378.

This sequence belongs to the glycosyl hydrolase 29 family. In terms of assembly, homotetramer.

It is found in the lysosome. The enzyme catalyses an alpha-L-fucoside + H2O = L-fucose + an alcohol. It catalyses the reaction a neolactoside IV(2)-alpha-Fuc-nLc4Cer(d18:1(4E)) + H2O = a neolactoside nLc4Cer(d18:1(4E)) + L-fucose. The catalysed reaction is a neolactoside IV(2)-alpha-Fuc-nLc4Cer(d18:0) + H2O = a neolactoside nLc4Cer(d18:0) + L-fucose. Alpha-L-fucosidase is responsible for hydrolyzing the alpha-1,6-linked fucose joined to the reducing-end N-acetylglucosamine of the carbohydrate moieties of glycoproteins. The polypeptide is Tissue alpha-L-fucosidase (Fuca1) (Mus musculus (Mouse)).